The chain runs to 282 residues: Elongation factor Ts (282 aa).

An involved in Mg(2+) ion dislocation from EF-Tu region spans residues 80 to 83 (TDFV).

This sequence belongs to the EF-Ts family.

It localises to the cytoplasm. Functionally, associates with the EF-Tu.GDP complex and induces the exchange of GDP to GTP. It remains bound to the aminoacyl-tRNA.EF-Tu.GTP complex up to the GTP hydrolysis stage on the ribosome. This Chlamydia trachomatis serovar L2b (strain UCH-1/proctitis) protein is Elongation factor Ts.